Reading from the N-terminus, the 458-residue chain is Exodeoxyribonuclease 7 large subunit (458 aa).

The protein belongs to the XseA family. Heterooligomer composed of large and small subunits.

The protein localises to the cytoplasm. It carries out the reaction Exonucleolytic cleavage in either 5'- to 3'- or 3'- to 5'-direction to yield nucleoside 5'-phosphates.. Its function is as follows. Bidirectionally degrades single-stranded DNA into large acid-insoluble oligonucleotides, which are then degraded further into small acid-soluble oligonucleotides. This chain is Exodeoxyribonuclease 7 large subunit, found in Sodalis glossinidius (strain morsitans).